The sequence spans 133 residues: Small ribosomal subunit protein uS8 (133 aa).

The protein belongs to the universal ribosomal protein uS8 family. Part of the 30S ribosomal subunit. Contacts proteins S5 and S12.

In terms of biological role, one of the primary rRNA binding proteins, it binds directly to 16S rRNA central domain where it helps coordinate assembly of the platform of the 30S subunit. In Chloroflexus aurantiacus (strain ATCC 29364 / DSM 637 / Y-400-fl), this protein is Small ribosomal subunit protein uS8.